The chain runs to 34 residues: Sarcoplasmic/endoplasmic reticulum calcium ATPase regulator DWORF (34 aa).

The chain crosses the membrane as a helical span at residues 12-32; that stretch reads IVPILLLVGWIVGCIIVIYIV.

As to quaternary structure, homooligomer. Can also form heterooligomers with other sarcoplasmic/endoplasmic reticulum calcium ATPase (SERCA) regulators ARLN, ERLN, PLN and SLN. Monomer. Interacts with ATP2A1/SERCA1; the interaction results in activation of ATP2A1. Interacts as a monomer with ATP2A2/SERCA2; the interaction results in activation of ATP2A2. As to expression, highly expressed in heart (at protein level). Detected in heart and soleus, a postural muscle group of the hindlimb containing the highest enrichment of slow-twitch muscle fibers. Also expressed in diaphragm, which contains some slow-twitch fibers. Not detected in the quadriceps, a fast-twitch muscle group, or in cardiac atrial muscle. Not expressed in the prenatal heart but gradually increases in abundance postnatally.

It localises to the sarcoplasmic reticulum membrane. Enhances the activity of ATP2A1/SERCA1 ATPase in sarcoplasmic reticulum by displacing ATP2A1/SERCA1 inhibitors, thereby acting as a key regulator of skeletal muscle activity. Also enhances the activity of the ATP2A2/SERCA2 ATPase. Does not directly stimulate SERCA pump activity. Binds preferentially to the phosphorylated E1 and E2 conformational forms of ATP2A2 which predominate at high Ca(2+) concentrations during the systolic phase of the cardiac cycle. Competes with ATP2A2 inhibitor phospholamban (PLN) for binding to ATP2A2 and displaces PLN. Can activate ATP2A2 directly in the absence of PLN. Also enhances sarcoplasmic reticulum Ca(2+) uptake and myocyte contractility by displacing the SERCA inhibitory peptides sarcolipin (SLN) and myoregulin (MRLN). This is Sarcoplasmic/endoplasmic reticulum calcium ATPase regulator DWORF from Mus musculus (Mouse).